Reading from the N-terminus, the 517-residue chain is Sugar transport protein MST1 (517 aa).

Residues 1 to 25 (MAGGVIVANDGDGSAVDHGGRLTFS) are Cytoplasmic-facing. A helical membrane pass occupies residues 26 to 46 (VVITCLVAASGGLIFGYDVGI). Residues 47–83 (SGGVSTMEPFLRRFFPGVVRRMAEARPGNEYCVYDSQ) are Extracellular-facing. The chain crosses the membrane as a helical span at residues 84 to 104 (ALTAFTSSLYVAGLVASLVAS). Topologically, residues 105–120 (RVTRAMGRQAVMVMGG) are cytoplasmic. Residues 121-141 (ALFFAGGAVTGFAVNIAMLIV) traverse the membrane as a helical segment. Residues 142-143 (GR) lie on the Extracellular side of the membrane. A helical transmembrane segment spans residues 144–164 (MLLGFGVGFTNQAAPLFLAEM). Residues 165–170 (APTRWR) are Cytoplasmic-facing. Residues 171–191 (GSLTAGFQFFLAVGVVIATVT) form a helical membrane-spanning segment. Residues 192–203 (NYFASRVPWGWR) are Extracellular-facing. A helical membrane pass occupies residues 204–224 (LSLGLAGAPAVVIFLGALFLT). At 225–288 (DTPSSLVMRG…AARREYRPYL (64 aa)) the chain is on the cytoplasmic side. The chain crosses the membrane as a helical span at residues 289-309 (VFAVAMPMFFQLTGVIVISFF). At 310 to 325 (SPLVFRTVGFGSNAAL) the chain is on the extracellular side. A helical transmembrane segment spans residues 326-346 (MGNVILGAVNLVCLMLSTLVI). At 347-352 (DRYGRK) the chain is on the cytoplasmic side. A helical transmembrane segment spans residues 353–373 (VLFMVGGAIMIIAQVGVAWIM). The Extracellular portion of the chain corresponds to 374 to 389 (GAQVGKNGSEAMARPY). A helical transmembrane segment spans residues 390–410 (AVAVVAFTCLHTAGFGWSWGP). Topologically, residues 411–430 (LGWVIPGEIFPVDIRSAGQA) are cytoplasmic. Residues 431 to 451 (MNVSIGLGLTFVQTQSFLAML) form a helical membrane-spanning segment. Residues 452-456 (CRFRY) lie on the Extracellular side of the membrane. A helical membrane pass occupies residues 457–477 (GTFAYYAAWVAVMTVFIAVFL). At 478-517 (PETKGVPLESMATVWARHWYWKRFAREQPKTSADEPTGTY) the chain is on the cytoplasmic side.

This sequence belongs to the major facilitator superfamily. Sugar transporter (TC 2.A.1.1) family.

It is found in the membrane. Mediates active uptake of hexoses by sugar:proton symport. The protein is Sugar transport protein MST1 of Oryza sativa subsp. japonica (Rice).